Reading from the N-terminus, the 525-residue chain is MAVWHSANGKVYLPPSTPVARVQSTDEYIQRTNIYYHAFSDRLLTVGHPYFNVYNITGDKLEVPKVSGNQHRVFRLKLPDPNRFALADMSVYNPDKERLVWACRGLEIGRGQPLGVGSTGHPYFNKVKDTENSNAYITFSKDGQNTAFSKDDRLNTSFDPKQIQMFIVGCTPCIGEHWDKAVPCAKNDQQTGLCPPIELKNTYIEDGDMADIGFGNMNFKALQDSRSDVSLDIVNETCKYPDFLKMQNDIYGDACFFYARREQCYARHFFVRGGKTGDDIPGAQIDNGTYKNQFYIPGADGQAQKTIGNAMYFPTVSGSLVSSDAQLFNRPFWLQRAQGHNNGILWANQMFITVVDNTRNTNFSISVYNQAGPLKDVADYNAEQFREYQRHVEEYEISLILQLCKVPLKAEVLAQINAMNSSLLEDWQLGFVPTPDNPIQDTYRYIDSLATRCPDKNPPKEKEDPYKGLHFWDVDLTERLSLDLDQYSLGRKFLFQAGLQHTTVNGTKAVSYKGSNRGTKRKRKN.

This sequence belongs to the papillomaviridae L1 protein family. In terms of assembly, self-assembles into homopentamers. The capsid has an icosahedral symmetry and consists of 72 capsomers, with each capsomer being a pentamer of L1. Interacts with the minor capsid protein L2; this interaction is necessary for viral genome encapsidation. Interacts with protein E2; this interaction enhances E2-dependent replication and transcription activation.

The protein resides in the virion. Its subcellular location is the host nucleus. In terms of biological role, forms an icosahedral capsid with a T=7 symmetry and a 50 nm diameter. The capsid is composed of 72 pentamers linked to each other by disulfide bonds and associated with L2 proteins. Binds to heparan sulfate proteoglycans on cell surface of basal layer keratinocytes to provide initial virion attachment. This binding mediates a conformational change in the virus capsid that facilitates efficient infection. The virion enters the host cell via endocytosis. During virus trafficking, L1 protein dissociates from the viral DNA and the genomic DNA is released to the host nucleus. The virion assembly takes place within the cell nucleus. Encapsulates the genomic DNA together with protein L2. The chain is Major capsid protein L1 from Human papillomavirus type 5b.